The following is a 308-amino-acid chain: Protein translocase subunit SecF (308 aa).

Helical transmembrane passes span 10 to 30, 129 to 149, 160 to 180, 181 to 201, 241 to 261, and 264 to 284; these read LFFAISLAMIIPGLIVMAIFG, LAVSIAALAVIIYITWAFRGV, IIAMIHDVLVVISLVSIGGVL, FGWQVDALFLTALLSVIGFSV, TQLMTVEYMLLAIALFGGITL, and FAIILLVGLFMGTYSSIFIAA.

Belongs to the SecD/SecF family. SecF subfamily. In terms of assembly, forms a complex with SecD. Part of the essential Sec protein translocation apparatus which comprises SecA, SecYEG and auxiliary proteins SecDF. Other proteins may also be involved.

The protein resides in the cell membrane. Part of the Sec protein translocase complex. Interacts with the SecYEG preprotein conducting channel. SecDF uses the proton motive force (PMF) to complete protein translocation after the ATP-dependent function of SecA. This is Protein translocase subunit SecF from Anaerolinea thermophila (strain DSM 14523 / JCM 11388 / NBRC 100420 / UNI-1).